A 129-amino-acid chain; its full sequence is F(420)H(2) dehydrogenase subunit A (129 aa).

The next 3 helical transmembrane spans lie at 9-29, 64-84, and 95-115; these read IIDSYIPVAIFLAVGLIMPPM, FNVEYYLYAIAFVLFDIEVLF, and HGITSIAVVEMFVFIFILLFG.

Belongs to the complex I subunit 3 family. As to quaternary structure, the FPO complex is composed of at least 13 different subunits. FpoA, FpoH, FpoJ, FpoK, FpoL, FpoM and FpoN proteins constitute the membrane sector of the complex.

The protein localises to the cell membrane. It carries out the reaction methanophenazine + reduced coenzyme F420-(gamma-L-Glu)(n) = dihydromethanophenazine + oxidized coenzyme F420-(gamma-L-Glu)(n) + H(+). Functionally, component of the F(420)H(2) dehydrogenase (FPO complex) which is part of the energy-conserving F(420)H(2):heterodisulfide oxidoreductase system. The membrane-bound electron transfer system of the complex plays an important role in the metabolism of methylotrophic methanogens when the organisms grow on methanol or methylamines. Catalyzes the oxidation of methanophenazine to dihydromethanophenazine. It shuttles electrons from F(420)H(2), via FAD and iron-sulfur (Fe-S) centers, to methanophenazine (an electron carrier in the membrane). It couples the redox reaction to proton translocation (for every two electrons transferred, two hydrogen ions are translocated across the cytoplasmic membrane), and thus conserves the redox energy in a proton gradient. It also catalyzes the oxidation of F(420)H(2) with quinones such as 2,3-dimethyl-1,4-naphthoquinone, 2-methyl-1,4-naphthoquinone and tetramethyl-p-benzoquinone. In Methanosarcina mazei (strain ATCC BAA-159 / DSM 3647 / Goe1 / Go1 / JCM 11833 / OCM 88) (Methanosarcina frisia), this protein is F(420)H(2) dehydrogenase subunit A (fpoA).